We begin with the raw amino-acid sequence, 453 residues long: T-box transcription factor T homolog (453 aa).

The T-box DNA-binding region spans 47–217 (LWRRFSKLTN…YNPFAKAFLD (171 aa)). Residues 283–304 (RSHRSTPYPPPPYEQKYSPTSA) are disordered.

Its subcellular location is the nucleus. May be involved in the transcriptional regulation of genes required for gastrulation. This is T-box transcription factor T homolog from Patiria pectinifera (Starfish).